We begin with the raw amino-acid sequence, 103 residues long: MRTLTLNELDSVSGGASGRDIAMAIGTLSGQFVAGGIGAAAGGVAGGAIYDYASTHKPNPAMSPSGLGGTIKQKPEGIPSEAWNYAAGRLCNWSPNNLSDVCL.

The propeptide occupies 1–15 (MRTLTLNELDSVSGG). Residues cysteine 91 and cysteine 102 are joined by a disulfide bond.

The protein localises to the secreted. Its function is as follows. Colicin V kills sensitive cells by disrupting the membrane potential. Functionally, colicins are polypeptide toxins produced by, and active against E.coli and closely related bacteria. This chain is Colicin-V (cvaC), found in Escherichia coli.